A 248-amino-acid polypeptide reads, in one-letter code: Trihelix transcription factor ENAP2 (248 aa).

Residues 1 to 13 are compositionally biased toward polar residues; sequence METTTPQSKSSVS. Positions 1 to 20 are disordered; it reads METTTPQSKSSVSHRPPLGR. Positions 24-113 form a DNA-binding region, MADF; it reads WSEEATATLV…RLDVLIGPVV (90 aa). The Nuclear localization signal signature appears at 69-76; the sequence is RKKTDLQC. The segment at 123-150 is disordered; sequence SAPFKNHLNPTGSNSTGSSLEDDDEDDD. The segment covering 130-141 has biased composition (polar residues); it reads LNPTGSNSTGSS. Residues 190–210 adopt a coiled-coil conformation; that stretch reads YERIEGKKQQMMIELEKQRME.

As to quaternary structure, interacts with the Agrobacterium tumefaciens virulence protein F (VirF) in the nucleus. Binds to EIN2 C-terminal region in the presence of ethylene.

The protein resides in the nucleus. It is found in the nucleoplasm. Probable transcription regulator. Promotes histone acetylation during ethylene signaling in an EIN2-dependent manner, thus regulating positively ethylene-responsive genes. This chain is Trihelix transcription factor ENAP2, found in Arabidopsis thaliana (Mouse-ear cress).